The sequence spans 730 residues: Multifunctional procollagen lysine hydroxylase and glycosyltransferase (730 aa).

An N-terminal signal peptide occupies residues 1 to 16 (MRVLPFLLPLIPVLLA). Positions 20–280 (TDLPELVVVT…CGLEVKESEE (261 aa)) are required for glycosyltransferase activity. UDP contacts are provided by residues 30–32 (VAT) and 98–100 (DAY). 3 residues coordinate Mn(2+): D98, D101, and H242. 245–248 (GPSK) contacts UDP. C268 and C271 are disulfide-bonded. The tract at residues 281-507 (VPLIALNLFI…YYGFLIVSDE (227 aa)) is accessory region. Residues C554 and C690 are joined by a disulfide bond. R590 and Y648 together coordinate 2-oxoglutarate. One can recognise a Fe2OG dioxygenase domain in the interval 639-730 (ESNMMFVVRY…RYIMVSFINP (92 aa)). Fe cation contacts are provided by H659 and D661. The tract at residues 664–707 (TFSIDIALNKKGRDYEGGGVRYIRYNCTVPADEVGYAMMFPGRL) is important for dimerization. Residue N689 is glycosylated (N-linked (GlcNAc...) asparagine). A Fe cation-binding site is contributed by H711. A 2-oxoglutarate-binding site is contributed by R721.

In terms of assembly, homodimer. Fe(2+) is required as a cofactor. The cofactor is L-ascorbate. Mn(2+) serves as cofactor.

The protein resides in the rough endoplasmic reticulum. It is found in the endoplasmic reticulum lumen. The protein localises to the endoplasmic reticulum membrane. Its subcellular location is the secreted. It localises to the extracellular space. The catalysed reaction is L-lysyl-[collagen] + 2-oxoglutarate + O2 = (5R)-5-hydroxy-L-lysyl-[collagen] + succinate + CO2. It carries out the reaction (5R)-5-hydroxy-L-lysyl-[collagen] + UDP-alpha-D-galactose = (5R)-5-O-(beta-D-galactosyl)-5-hydroxy-L-lysyl-[collagen] + UDP + H(+). The enzyme catalyses (5R)-5-O-(beta-D-galactosyl)-5-hydroxy-L-lysyl-[collagen] + UDP-alpha-D-glucose = (5R)-5-O-[alpha-D-glucosyl-(1-&gt;2)-beta-D-galactosyl]-5-hydroxy-L-lysyl-[collagen] + UDP + H(+). Functionally, multifunctional enzyme that catalyzes a series of post-translational modifications on Lys residues in procollagen. Catalyzes the formation of hydroxylysine residues in -Xaa-Lys-Gly- sequences in type IV collagens. Transfers galactose onto hydroxylysine groups, giving rise to galactosyl 5-hydroxylysine. Catalyzes the subsequent transfer of glucose moieties, giving rise to 1,2-glucosylgalactosyl-5-hydroxylysine residues. Essential for normal biosynthesis and secretion of type IV collagens. Essential for normal stability of the basement membrane. The polypeptide is Multifunctional procollagen lysine hydroxylase and glycosyltransferase (let-268) (Caenorhabditis elegans).